Reading from the N-terminus, the 530-residue chain is Autoinducer-2 kinase (530 aa).

The protein belongs to the FGGY kinase family.

It is found in the cytoplasm. It carries out the reaction (S)-4,5-dihydroxypentane-2,3-dione + ATP = (2S)-2-hydroxy-3,4-dioxopentyl phosphate + ADP + H(+). Functionally, catalyzes the phosphorylation of autoinducer-2 (AI-2) to phospho-AI-2, which subsequently inactivates the transcriptional regulator LsrR and leads to the transcription of the lsr operon. Phosphorylates the ring-open form of (S)-4,5-dihydroxypentane-2,3-dione (DPD), which is the precursor to all AI-2 signaling molecules, at the C5 position. The protein is Autoinducer-2 kinase of Photorhabdus laumondii subsp. laumondii (strain DSM 15139 / CIP 105565 / TT01) (Photorhabdus luminescens subsp. laumondii).